Reading from the N-terminus, the 423-residue chain is Kynureninase (423 aa).

Residues leucine 105, serine 106, 133 to 136, aspartate 218, histidine 221, and tyrosine 243 contribute to the pyridoxal 5'-phosphate site; that span reads FPSD. Lysine 244 carries the post-translational modification N6-(pyridoxal phosphate)lysine. 2 residues coordinate pyridoxal 5'-phosphate: tryptophan 273 and asparagine 301.

The protein belongs to the kynureninase family. As to quaternary structure, homodimer. It depends on pyridoxal 5'-phosphate as a cofactor.

The enzyme catalyses L-kynurenine + H2O = anthranilate + L-alanine + H(+). The catalysed reaction is 3-hydroxy-L-kynurenine + H2O = 3-hydroxyanthranilate + L-alanine + H(+). It functions in the pathway amino-acid degradation; L-kynurenine degradation; L-alanine and anthranilate from L-kynurenine: step 1/1. The protein operates within cofactor biosynthesis; NAD(+) biosynthesis; quinolinate from L-kynurenine: step 2/3. Its function is as follows. Catalyzes the cleavage of L-kynurenine (L-Kyn) and L-3-hydroxykynurenine (L-3OHKyn) into anthranilic acid (AA) and 3-hydroxyanthranilic acid (3-OHAA), respectively. In Xanthomonas oryzae pv. oryzae (strain KACC10331 / KXO85), this protein is Kynureninase.